Consider the following 122-residue polypeptide: Large ribosomal subunit protein uL14 (122 aa).

The protein belongs to the universal ribosomal protein uL14 family. In terms of assembly, part of the 50S ribosomal subunit. Forms a cluster with proteins L3 and L19. In the 70S ribosome, L14 and L19 interact and together make contacts with the 16S rRNA in bridges B5 and B8.

In terms of biological role, binds to 23S rRNA. Forms part of two intersubunit bridges in the 70S ribosome. The chain is Large ribosomal subunit protein uL14 from Psychrobacter sp. (strain PRwf-1).